Reading from the N-terminus, the 686-residue chain is DNA ligase 2 (686 aa).

NAD(+) contacts are provided by residues 37-41 (DDEYD), 86-87 (SL), and E121. K123 serves as the catalytic N6-AMP-lysine intermediate. Residues R144, E179, K295, and K319 each contribute to the NAD(+) site. Residues C413, C416, C431, and C436 each coordinate Zn(2+). The BRCT domain maps to 593-681 (VRGEQLAGLN…GVQLPGVQAS (89 aa)).

This sequence belongs to the NAD-dependent DNA ligase family. LigA subfamily. Mg(2+) serves as cofactor. It depends on Mn(2+) as a cofactor.

It catalyses the reaction NAD(+) + (deoxyribonucleotide)n-3'-hydroxyl + 5'-phospho-(deoxyribonucleotide)m = (deoxyribonucleotide)n+m + AMP + beta-nicotinamide D-nucleotide.. DNA ligase that catalyzes the formation of phosphodiester linkages between 5'-phosphoryl and 3'-hydroxyl groups in double-stranded DNA using NAD as a coenzyme and as the energy source for the reaction. It is essential for DNA replication and repair of damaged DNA. The polypeptide is DNA ligase 2 (Deinococcus deserti (strain DSM 17065 / CIP 109153 / LMG 22923 / VCD115)).